Consider the following 203-residue polypeptide: Large ribosomal subunit protein bL25 (203 aa).

This sequence belongs to the bacterial ribosomal protein bL25 family. CTC subfamily. In terms of assembly, part of the 50S ribosomal subunit; part of the 5S rRNA/L5/L18/L25 subcomplex. Contacts the 5S rRNA. Binds to the 5S rRNA independently of L5 and L18.

Functionally, this is one of the proteins that binds to the 5S RNA in the ribosome where it forms part of the central protuberance. The sequence is that of Large ribosomal subunit protein bL25 from Wolbachia pipientis subsp. Culex pipiens (strain wPip).